Reading from the N-terminus, the 140-residue chain is Phospholipase A2 (140 aa).

Residues 1–21 form the signal peptide; it reads MNPAHLLVLAAVCISLSGASS. A propeptide spanning residues 22-27 is cleaved from the precursor; it reads IAPQPL. Disulfide bonds link C38-C97, C52-C139, C54-C70, C69-C125, C76-C118, C86-C111, and C104-C116. N39 carries N-linked (GlcNAc...) asparagine glycosylation. Residues Y53, G55, and G57 each coordinate Ca(2+). The active site involves H73. D74 contacts Ca(2+). A glycan (N-linked (GlcNAc...) asparagine) is linked at N107. Residue D119 is part of the active site.

The protein belongs to the phospholipase A2 family. Group I subfamily. D49 sub-subfamily. It depends on Ca(2+) as a cofactor. As to expression, expressed by the venom gland.

The protein localises to the secreted. The enzyme catalyses a 1,2-diacyl-sn-glycero-3-phosphocholine + H2O = a 1-acyl-sn-glycero-3-phosphocholine + a fatty acid + H(+). PLA2 catalyzes the calcium-dependent hydrolysis of the 2-acyl groups in 3-sn-phosphoglycerides. In Micrurus altirostris (Uruguayan coral snake), this protein is Phospholipase A2.